The sequence spans 1026 residues: RecBCD enzyme subunit RecB (1026 aa).

The UvrD-like helicase ATP-binding domain maps to 1–438; sequence MSSFDIFSPT…LILDTNYRST (438 aa). Residues 1 to 766 are DNA-binding and helicase activity, interacts with RecC; that stretch reads MSSFDIFSPT…LANYANVTKH (766 aa). ATP is bound at residue 21–28; that stretch reads ASAGTGKT. The segment at 815–1026 is nuclease activity, interacts with RecD and RecA; that stretch reads SRTIHSFSST…KGNGFLQPGR (212 aa). 3 residues coordinate Mg(2+): H854, D940, and D953. Catalysis depends on D953, which acts as the For nuclease activity.

It belongs to the helicase family. UvrD subfamily. In terms of assembly, heterotrimer of RecB, RecC and RecD. All subunits contribute to DNA-binding. Interacts with RecA. Requires Mg(2+) as cofactor.

It carries out the reaction Exonucleolytic cleavage (in the presence of ATP) in either 5'- to 3'- or 3'- to 5'-direction to yield 5'-phosphooligonucleotides.. It catalyses the reaction Couples ATP hydrolysis with the unwinding of duplex DNA by translocating in the 3'-5' direction.. The enzyme catalyses ATP + H2O = ADP + phosphate + H(+). Functionally, a helicase/nuclease that prepares dsDNA breaks (DSB) for recombinational DNA repair. Binds to DSBs and unwinds DNA via a highly rapid and processive ATP-dependent bidirectional helicase activity. Unwinds dsDNA until it encounters a Chi (crossover hotspot instigator) sequence from the 3' direction. Cuts ssDNA a few nucleotides 3' to the Chi site. The properties and activities of the enzyme are changed at Chi. The Chi-altered holoenzyme produces a long 3'-ssDNA overhang and facilitates RecA-binding to the ssDNA for homologous DNA recombination and repair. Holoenzyme degrades any linearized DNA that is unable to undergo homologous recombination. In the holoenzyme this subunit contributes ATPase, 3'-5' helicase, exonuclease activity and loads RecA onto ssDNA. In Chlamydia trachomatis serovar D (strain ATCC VR-885 / DSM 19411 / UW-3/Cx), this protein is RecBCD enzyme subunit RecB.